A 105-amino-acid polypeptide reads, in one-letter code: Protein yippee-like At4g27740 (105 aa).

Residues 8–105 (PTYFCRNCEN…IEKLKLTKRY (98 aa)) form the Yippee domain. Residues Cys-12, Cys-15, Cys-68, and Cys-71 each contribute to the Zn(2+) site.

Belongs to the yippee family.

This Arabidopsis thaliana (Mouse-ear cress) protein is Protein yippee-like At4g27740.